The chain runs to 60 residues: Large ribosomal subunit protein uL30 (60 aa).

It belongs to the universal ribosomal protein uL30 family. As to quaternary structure, part of the 50S ribosomal subunit.

This chain is Large ribosomal subunit protein uL30, found in Bacillus pumilus (strain SAFR-032).